The primary structure comprises 734 residues: Photosystem I P700 chlorophyll a apoprotein A2 (734 aa).

Helical transmembrane passes span 46-69 (IFAS…FHVA), 135-158 (LYTG…LHLQ), 175-199 (LNHH…HVAI), 273-291 (IAHH…GHMY), 330-353 (IHFQ…QHMY), 369-395 (AALY…IFFI), 417-439 (AIIS…LYVH), and 517-535 (FLVH…LILV). [4Fe-4S] cluster contacts are provided by C559 and C568. 2 helical membrane passes run 575–596 (AFYL…YWHW) and 643–665 (LSVW…MFLI). Chlorophyll a-binding residues include H654, M662, and Y670. W671 contributes to the phylloquinone binding site. The chain crosses the membrane as a helical span at residues 707-727 (LVGLAHFSVGYIFTYAAFLIA).

This sequence belongs to the PsaA/PsaB family. The PsaA/B heterodimer binds the P700 chlorophyll special pair and subsequent electron acceptors. PSI consists of a core antenna complex that captures photons, and an electron transfer chain that converts photonic excitation into a charge separation. The eukaryotic PSI reaction center is composed of at least 11 subunits. P700 is a chlorophyll a/chlorophyll a' dimer, A0 is one or more chlorophyll a, A1 is one or both phylloquinones and FX is a shared 4Fe-4S iron-sulfur center. serves as cofactor.

It localises to the plastid. Its subcellular location is the chloroplast thylakoid membrane. The catalysed reaction is reduced [plastocyanin] + hnu + oxidized [2Fe-2S]-[ferredoxin] = oxidized [plastocyanin] + reduced [2Fe-2S]-[ferredoxin]. Its function is as follows. PsaA and PsaB bind P700, the primary electron donor of photosystem I (PSI), as well as the electron acceptors A0, A1 and FX. PSI is a plastocyanin-ferredoxin oxidoreductase, converting photonic excitation into a charge separation, which transfers an electron from the donor P700 chlorophyll pair to the spectroscopically characterized acceptors A0, A1, FX, FA and FB in turn. Oxidized P700 is reduced on the lumenal side of the thylakoid membrane by plastocyanin. This is Photosystem I P700 chlorophyll a apoprotein A2 from Eucalyptus globulus subsp. globulus (Tasmanian blue gum).